The chain runs to 167 residues: uncharacterized protein (167 aa).

This is an uncharacterized protein from Acanthamoeba polyphaga (Amoeba).